An 823-amino-acid chain; its full sequence is Protein Jade-3 (823 aa).

Positions 1–32 are disordered; the sequence is MKRHRPVSSSDSSDESPSTSFTSGSMYRIKSK. Residues 8–25 are compositionally biased toward low complexity; the sequence is SSSDSSDESPSTSFTSGS. Lys-30 and Lys-32 each carry N6-acetyllysine. Position 85 is a phosphoserine (Ser-85). Residues 200–250 form a PHD-type 1 zinc finger; sequence DVICDVCRSPDSEEGNDMVFCDKCNVCVHQACYGILKVPEGSWLCRSCVLG. A C2HC pre-PHD-type zinc finger spans residues 252–286; it reads YPQCVLCPKKGGALKTTKTGTKWAHVSCALWIPEV. Residues 310 to 366 form a PHD-type 2 zinc finger; it reads LVCNLCKLKTGACIQCSIKSCITAFHVTCAFEHGLEMKTILDEGDEVKFKSYCLKHS. 2 disordered regions span residues 372–395 and 542–576; these read LGEA…KTSL and KLKM…VHSI. The span at 561-575 shows a compositional bias: low complexity; sequence DQQPHSPDSSSSVHS. Ser-566 bears the Phosphoserine mark. Lys-601 carries the N6-acetyllysine modification. The residue at position 608 (Ser-608) is a Phosphoserine. Residues 609–630 form a disordered region; it reads LSHSRSEAKESSPAWRTPSSEC. At Lys-638 the chain carries N6-acetyllysine. 2 stretches are compositionally biased toward polar residues: residues 650–664 and 673–684; these read SSIG…SKFA and WSGNVTQKDSSS. The segment at 650 to 684 is disordered; that stretch reads SSIGNGKSQPNSKFAKSNGLEGSWSGNVTQKDSSS. Lys-735 is subject to N6-acetyllysine. Positions 758-823 are disordered; the sequence is RAPYQENDGY…HPLSHSSMQR (66 aa). Residues Ser-774, Ser-776, and Ser-780 each carry the phosphoserine modification. Residues 781–809 are compositionally biased toward basic and acidic residues; sequence DGNKEKVRVRKDSSDRENPPHDSRRDCHG.

This sequence belongs to the JADE family. As to quaternary structure, component of the HBO1 complex composed at least of ING4 or ING5, KAT7/HBO1, MEAF6, and one of JADE1, JADE2 and JADE3. In terms of tissue distribution, ubiquitously expressed, with highest levels in placenta and uterus.

In terms of biological role, scaffold subunit of some HBO1 complexes, which have a histone H4 acetyltransferase activity. This Homo sapiens (Human) protein is Protein Jade-3 (JADE3).